Consider the following 343-residue polypeptide: tRNA N6-adenosine threonylcarbamoyltransferase (343 aa).

Fe cation-binding residues include histidine 115 and histidine 119. Substrate contacts are provided by residues 137–141 (IVSGG), aspartate 170, glycine 183, aspartate 187, and asparagine 276. Aspartate 304 is a binding site for Fe cation.

The protein belongs to the KAE1 / TsaD family. Requires Fe(2+) as cofactor.

Its subcellular location is the cytoplasm. The catalysed reaction is L-threonylcarbamoyladenylate + adenosine(37) in tRNA = N(6)-L-threonylcarbamoyladenosine(37) in tRNA + AMP + H(+). Functionally, required for the formation of a threonylcarbamoyl group on adenosine at position 37 (t(6)A37) in tRNAs that read codons beginning with adenine. Is involved in the transfer of the threonylcarbamoyl moiety of threonylcarbamoyl-AMP (TC-AMP) to the N6 group of A37, together with TsaE and TsaB. TsaD likely plays a direct catalytic role in this reaction. This Staphylococcus carnosus (strain TM300) protein is tRNA N6-adenosine threonylcarbamoyltransferase.